The sequence spans 354 residues: Phosphate acyltransferase (354 aa).

The protein belongs to the PlsX family. In terms of assembly, homodimer. Probably interacts with PlsY.

The protein resides in the cytoplasm. The enzyme catalyses a fatty acyl-[ACP] + phosphate = an acyl phosphate + holo-[ACP]. It functions in the pathway lipid metabolism; phospholipid metabolism. Catalyzes the reversible formation of acyl-phosphate (acyl-PO(4)) from acyl-[acyl-carrier-protein] (acyl-ACP). This enzyme utilizes acyl-ACP as fatty acyl donor, but not acyl-CoA. In Ralstonia nicotianae (strain ATCC BAA-1114 / GMI1000) (Ralstonia solanacearum), this protein is Phosphate acyltransferase.